The chain runs to 348 residues: RNA 3'-terminal phosphate cyclase (348 aa).

Residues Gln-101 and 286–289 (HMAD) contribute to the ATP site. Catalysis depends on His-312, which acts as the Tele-AMP-histidine intermediate.

It belongs to the RNA 3'-terminal cyclase family. Type 1 subfamily.

Its subcellular location is the cytoplasm. It carries out the reaction a 3'-end 3'-phospho-ribonucleotide-RNA + ATP = a 3'-end 2',3'-cyclophospho-ribonucleotide-RNA + AMP + diphosphate. Catalyzes the conversion of 3'-phosphate to a 2',3'-cyclic phosphodiester at the end of RNA. The mechanism of action of the enzyme occurs in 3 steps: (A) adenylation of the enzyme by ATP; (B) transfer of adenylate to an RNA-N3'P to produce RNA-N3'PP5'A; (C) and attack of the adjacent 2'-hydroxyl on the 3'-phosphorus in the diester linkage to produce the cyclic end product. The biological role of this enzyme is unknown but it is likely to function in some aspects of cellular RNA processing. The polypeptide is RNA 3'-terminal phosphate cyclase (Pyrobaculum aerophilum (strain ATCC 51768 / DSM 7523 / JCM 9630 / CIP 104966 / NBRC 100827 / IM2)).